The primary structure comprises 925 residues: Probable dipeptidyl-aminopeptidase B (925 aa).

The segment at 1–104 (MTPYRDVPPV…RHAQKKGPGM (104 aa)) is disordered. Topologically, residues 1-110 (MTPYRDVPPV…GPGMDRGMRR (110 aa)) are cytoplasmic. Positions 31–40 (ESGSSVSTTS) are enriched in low complexity. Residues 55 to 72 (LSEKQPRGDDNEDALKDE) are compositionally biased toward basic and acidic residues. Residues 111–131 (ALLIAAGLLVSAWVAGLFVYI) traverse the membrane as a helical; Signal-anchor for type II membrane protein segment. The Vacuolar segment spans residues 132–925 (ATKSYKPASA…PKPNGKRRAA (794 aa)). A glycan (N-linked (GlcNAc...) asparagine) is linked at N369. S773 serves as the catalytic Charge relay system. The N-linked (GlcNAc...) asparagine glycan is linked to N832. Residues D850 and H883 each act as charge relay system in the active site.

Belongs to the peptidase S9B family.

Its subcellular location is the vacuole membrane. It carries out the reaction Release of an N-terminal dipeptide, Xaa-Yaa-|-Zaa-, from a polypeptide, preferentially when Yaa is Pro, provided Zaa is neither Pro nor hydroxyproline.. Functionally, type IV dipeptidyl-peptidase which removes N-terminal dipeptides sequentially from polypeptides having unsubstituted N-termini provided that the penultimate residue is proline. In Chaetomium globosum (strain ATCC 6205 / CBS 148.51 / DSM 1962 / NBRC 6347 / NRRL 1970) (Soil fungus), this protein is Probable dipeptidyl-aminopeptidase B (DAPB).